We begin with the raw amino-acid sequence, 431 residues long: MELESLFQDIMDGFAVYNNKVAVAVSGGIDSIVLLHLITSWAEKRQCPPPIALAVNHGLRPESQEEVEFVVSYAKELGVKKSFILNWKRQNIKGNVQSQARKARYELLTEWCKNNDVKHLFIAHHKDDQAETFLLRLERGSGLDGLSSMDYKSSLNGVCMLRPLLSFSRSRIKKYADFYRLKWVEDRSNQSLKYKRTLYRNLLKASGNQEILTERICLTTLHIKRATKALMHYTRLAFNDCVNVHDLGYIEIKLSEFYKLPEEIALRLLLYSIMVISSKHYKPRYNSLIAIFNKVLQKDNDVHCTLSGCKIRKYGESILIIRESSKIQEISVSLPLNAPIEWDNRFSCTILGNQECSVTIAPLKKTQKIPKFLKDYDCCPEVFYSLPVVLKDGKVLAYLHLNHDRKNINGDEVQCIINSTIKQNLVILAGI.

26–31 (SGGIDS) serves as a coordination point for ATP.

It belongs to the tRNA(Ile)-lysidine synthase family.

It is found in the cytoplasm. It catalyses the reaction cytidine(34) in tRNA(Ile2) + L-lysine + ATP = lysidine(34) in tRNA(Ile2) + AMP + diphosphate + H(+). In terms of biological role, ligates lysine onto the cytidine present at position 34 of the AUA codon-specific tRNA(Ile) that contains the anticodon CAU, in an ATP-dependent manner. Cytidine is converted to lysidine, thus changing the amino acid specificity of the tRNA from methionine to isoleucine. The sequence is that of tRNA(Ile)-lysidine synthase from Wolbachia sp. subsp. Brugia malayi (strain TRS).